The following is a 305-amino-acid chain: Olfactory receptor 5M11 (305 aa).

Over 1–25 (MSNTNGSAITEFILLGLTDCPELQS) the chain is Extracellular. N5 carries an N-linked (GlcNAc...) asparagine glycan. The chain crosses the membrane as a helical span at residues 26–46 (LLFVLFLVVYLVTLLGNLGMI). The Cytoplasmic segment spans residues 47-54 (MLMRLDSR). The chain crosses the membrane as a helical span at residues 55-75 (LHTPMYFFLTNLAFVDLCYTS). The Extracellular portion of the chain corresponds to 76-98 (NATPQMSTNIVSEKTISFAGCFT). Cysteines 96 and 188 form a disulfide. A helical membrane pass occupies residues 99-119 (QCYIFIALLLTEFYMLAAMAY). The Cytoplasmic portion of the chain corresponds to 120 to 138 (DRYVAIYDPLRYSVKTSRR). Residues 139 to 159 (VCICLATFPYVYGFSDGLFQA) traverse the membrane as a helical segment. Residues 160 to 195 (ILTFRLTFCRSSVINHFYCADPPLIKLSCSDTYVKE) lie on the Extracellular side of the membrane. Residues 196–216 (HAMFISAGFNLSSSLTIVLVS) form a helical membrane-spanning segment. Residues 217 to 236 (YAFILAAILRIKSAEGRHKA) lie on the Cytoplasmic side of the membrane. The helical transmembrane segment at 237–257 (FSTCGSHMMAVTLFYGTLFCM) threads the bilayer. Topologically, residues 258–270 (YIRPPTDKTVEES) are extracellular. A helical transmembrane segment spans residues 271-291 (KIIAVFYTFVSPVLNPLIYSL). Residues 292 to 305 (RNKDVKQALKNVLR) lie on the Cytoplasmic side of the membrane.

The protein belongs to the G-protein coupled receptor 1 family.

The protein localises to the cell membrane. In terms of biological role, odorant receptor. The protein is Olfactory receptor 5M11 (OR5M11) of Homo sapiens (Human).